Consider the following 344-residue polypeptide: Anamorsin homolog 1 (344 aa).

The N-terminal SAM-like domain stretch occupies residues methionine 1 to lysine 169. The interval lysine 170 to leucine 233 is linker. 4 residues coordinate [2Fe-2S] cluster: cysteine 244, cysteine 251, cysteine 254, and cysteine 256. The fe-S binding site A stretch occupies residues cysteine 244 to cysteine 256. [4Fe-4S] cluster contacts are provided by cysteine 282, cysteine 285, cysteine 293, and cysteine 296. 2 short sequence motifs (cx2C motif) span residues cysteine 282–cysteine 285 and cysteine 293–cysteine 296. Residues cysteine 282 to cysteine 296 are fe-S binding site B.

It belongs to the anamorsin family. In terms of assembly, monomer. [2Fe-2S] cluster is required as a cofactor. Requires [4Fe-4S] cluster as cofactor.

The protein localises to the cytoplasm. It localises to the mitochondrion intermembrane space. In terms of biological role, component of the cytosolic iron-sulfur (Fe-S) protein assembly (CIA) machinery. Required for the maturation of extramitochondrial Fe-S proteins. Part of an electron transfer chain functioning in an early step of cytosolic Fe-S biogenesis, facilitating the de novo assembly of a [4Fe-4S] cluster on the cytosolic Fe-S scaffold complex. Electrons are transferred from NADPH via a FAD- and FMN-containing diflavin oxidoreductase. Together with the diflavin oxidoreductase, also required for the assembly of the diferric tyrosyl radical cofactor of ribonucleotide reductase (RNR), probably by providing electrons for reduction during radical cofactor maturation in the catalytic small subunit. This is Anamorsin homolog 1 from Physcomitrium patens (Spreading-leaved earth moss).